The sequence spans 438 residues: tRNA modification GTPase MnmE (438 aa).

Residues arginine 19, glutamate 76, and lysine 115 each contribute to the (6S)-5-formyl-5,6,7,8-tetrahydrofolate site. The region spanning 211–363 is the TrmE-type G domain; sequence GYKVAIIGRP…LSKELESYLN (153 aa). GTP is bound by residues 221–226, 240–246, and 265–268; these read NVGKSS, SETAGTT, and DTAG. The Mg(2+) site is built by serine 225 and threonine 246. A (6S)-5-formyl-5,6,7,8-tetrahydrofolate-binding site is contributed by lysine 438.

It belongs to the TRAFAC class TrmE-Era-EngA-EngB-Septin-like GTPase superfamily. TrmE GTPase family. In terms of assembly, homodimer. Heterotetramer of two MnmE and two MnmG subunits. Requires K(+) as cofactor.

Its subcellular location is the cytoplasm. In terms of biological role, exhibits a very high intrinsic GTPase hydrolysis rate. Involved in the addition of a carboxymethylaminomethyl (cmnm) group at the wobble position (U34) of certain tRNAs, forming tRNA-cmnm(5)s(2)U34. In Campylobacter fetus subsp. fetus (strain 82-40), this protein is tRNA modification GTPase MnmE.